Reading from the N-terminus, the 341-residue chain is MKAYKLLTTASIGALMLGMSTAAYSDNWRYAHEEYEGDVQDVFAQAFKGYVEDNSDHTVQVYRFGELGESDDIMEQTQNGILQFVNQSPGFTGSLIPSAQIFFIPYLMPTDMDTVLEFFDESKAINEMFPKLYAEHGLELLKMYPEGEMVVTADEPITSPEDFDNKKIRTMTNPLLAETYKAFGATPTPLPWGEVYGGLQTGIIDGQENPIFWIESGGLYEVSPNLTFTSHGWFTTAMMANQDFYEGLSEEDQQLVQDAADAAYDHTIEHIKGLSEESLEKIKAASDEVTVTRLNDEQIQAFKERAPQVEEKFIEMTGEQGQELLDQFKADLKAVQSESEG.

A signal peptide spans 1 to 25; the sequence is MKAYKLLTTASIGALMLGMSTAAYS. The L-ectoine site is built by glutamate 34, arginine 169, asparagine 209, tryptophan 213, and phenylalanine 234.

This sequence belongs to the bacterial solute-binding protein 7 family. As to quaternary structure, monomer. The complex comprises the extracytoplasmic solute receptor protein TeaA, and the two transmembrane proteins TeaB and TeaC.

Its subcellular location is the periplasm. Part of the tripartite ATP-independent periplasmic (TRAP) transport system TeaABC involved in the uptake of ectoine and hydroxyectoine in response to osmotic upshock. Probably functions as a recovery system for synthesized ectoine that leaks out of the cell. Binds ectoine with high affinity. Affinity for hydroxyectoine is approximately 20-fold lower. This chain is Ectoine-binding periplasmic protein TeaA (teaA), found in Halomonas elongata (strain ATCC 33173 / DSM 2581 / NBRC 15536 / NCIMB 2198 / 1H9).